A 555-amino-acid chain; its full sequence is DNA ligase (555 aa).

Glutamate 247 is an ATP binding site. Lysine 249 (N6-AMP-lysine intermediate) is an active-site residue. The ATP site is built by arginine 254, arginine 269, glutamate 298, phenylalanine 337, arginine 411, and lysine 417.

It belongs to the ATP-dependent DNA ligase family. Mg(2+) serves as cofactor.

The catalysed reaction is ATP + (deoxyribonucleotide)n-3'-hydroxyl + 5'-phospho-(deoxyribonucleotide)m = (deoxyribonucleotide)n+m + AMP + diphosphate.. Its function is as follows. DNA ligase that seals nicks in double-stranded DNA during DNA replication, DNA recombination and DNA repair. This chain is DNA ligase, found in Archaeoglobus fulgidus (strain ATCC 49558 / DSM 4304 / JCM 9628 / NBRC 100126 / VC-16).